A 444-amino-acid polypeptide reads, in one-letter code: Exodeoxyribonuclease 7 large subunit (444 aa).

It belongs to the XseA family. Heterooligomer composed of large and small subunits.

The protein resides in the cytoplasm. The enzyme catalyses Exonucleolytic cleavage in either 5'- to 3'- or 3'- to 5'-direction to yield nucleoside 5'-phosphates.. Its function is as follows. Bidirectionally degrades single-stranded DNA into large acid-insoluble oligonucleotides, which are then degraded further into small acid-soluble oligonucleotides. This chain is Exodeoxyribonuclease 7 large subunit, found in Pseudoalteromonas translucida (strain TAC 125).